A 489-amino-acid chain; its full sequence is ATP-dependent zinc metalloprotease FtsH 3 (489 aa).

Residues 1-14 (MNPRPVRPGGSLQQ) lie on the Cytoplasmic side of the membrane. A helical transmembrane segment spans residues 15-31 (SLLALGSLSVAVGLAVW). The Extracellular segment spans residues 32–489 (QQRTLGRGRS…GPRPARPAMN (458 aa)). Position 95–102 (95–102 (GPPGTGKT)) interacts with ATP. A Zn(2+)-binding site is contributed by His315. Residue Glu316 is part of the active site. 2 residues coordinate Zn(2+): His319 and Asp391.

It in the central section; belongs to the AAA ATPase family. In the C-terminal section; belongs to the peptidase M41 family. As to quaternary structure, homohexamer. It depends on Zn(2+) as a cofactor.

The protein resides in the cell membrane. Functionally, acts as a processive, ATP-dependent zinc metallopeptidase for both cytoplasmic and membrane proteins. Plays a role in the quality control of integral membrane proteins. The chain is ATP-dependent zinc metalloprotease FtsH 3 from Sphaerobacter thermophilus (strain ATCC 49802 / DSM 20745 / KCCM 41009 / NCIMB 13125 / S 6022).